The chain runs to 369 residues: Aminomethyltransferase (369 aa).

The protein belongs to the GcvT family. As to quaternary structure, the glycine cleavage system is composed of four proteins: P, T, L and H.

The catalysed reaction is N(6)-[(R)-S(8)-aminomethyldihydrolipoyl]-L-lysyl-[protein] + (6S)-5,6,7,8-tetrahydrofolate = N(6)-[(R)-dihydrolipoyl]-L-lysyl-[protein] + (6R)-5,10-methylene-5,6,7,8-tetrahydrofolate + NH4(+). Its function is as follows. The glycine cleavage system catalyzes the degradation of glycine. The sequence is that of Aminomethyltransferase from Xanthomonas oryzae pv. oryzae (strain MAFF 311018).